Consider the following 411-residue polypeptide: MAYLVWGKGRSGLAAFNLLKAKGFKAYIGDDKEDKNLWQDVWNEIDTVVLSPGIPPFHPLWKEAIKSSKEVIGETELAYRFYKGKNIIAVTGTDGKSTTVHLIHHFTSFKEGGNFGTPFSEIVLDNDKENVALEASSFQGKTLDTFRPNVGVFLNFSKDHLDWHPSLEDYLLSKQKIFKNQTQEDILILNAQKPVCDTPSLAKKIFFGENGDLKVVGSDVYYKDELLIENISHPSLKGLHNLYNIAVASFVAFSMGISLEEIKKNLETFEALPFRYQYLGNFEGIDICNDSKSTTVNALMSALESTKAPILLIAGGIDKGGDFSSIEAYKDKIKAVFLYGKDKNLIKDQIEHFLKVYVLEDLESALLKVKEQARKGDTILFSPACASFDMFESYKHRGEVFNELVKKHFNS.

Gly-92–Thr-98 serves as a coordination point for ATP.

Belongs to the MurCDEF family.

The protein localises to the cytoplasm. The catalysed reaction is UDP-N-acetyl-alpha-D-muramoyl-L-alanine + D-glutamate + ATP = UDP-N-acetyl-alpha-D-muramoyl-L-alanyl-D-glutamate + ADP + phosphate + H(+). Its pathway is cell wall biogenesis; peptidoglycan biosynthesis. Functionally, cell wall formation. Catalyzes the addition of glutamate to the nucleotide precursor UDP-N-acetylmuramoyl-L-alanine (UMA). In Hydrogenobaculum sp. (strain Y04AAS1), this protein is UDP-N-acetylmuramoylalanine--D-glutamate ligase.